A 395-amino-acid polypeptide reads, in one-letter code: Phosphonoacetaldehyde reductase (395 aa).

Fe cation is bound by residues aspartate 199, histidine 268, and histidine 282.

This sequence belongs to the iron-containing alcohol dehydrogenase family. It depends on Fe cation as a cofactor.

The catalysed reaction is 2-hydroxyethylphosphonate + NAD(+) = phosphonoacetaldehyde + NADH + H(+). It functions in the pathway secondary metabolite biosynthesis; bialaphos biosynthesis. Catalyzes the reduction of phosphonoacetaldehyde to 2-hydroxyethylphosphonate, a step in the biosynthesis of phosphinothricin tripeptide. Phosphinothricin tripeptide (PTT), also known as bialaphos (BA), is a natural-product antibiotic and potent herbicide. Can use both NAD and NADP but the preferred substrate is NAD. The sequence is that of Phosphonoacetaldehyde reductase (phpC) from Streptomyces viridochromogenes (strain DSM 40736 / JCM 4977 / BCRC 1201 / Tue 494).